The chain runs to 312 residues: Aspartate carbamoyltransferase catalytic subunit (312 aa).

Carbamoyl phosphate contacts are provided by R58 and T59. L-aspartate is bound at residue K86. Carbamoyl phosphate contacts are provided by R108, H136, and Q139. 2 residues coordinate L-aspartate: R169 and R223. G264 and P265 together coordinate carbamoyl phosphate.

This sequence belongs to the aspartate/ornithine carbamoyltransferase superfamily. ATCase family. As to quaternary structure, heterododecamer (2C3:3R2) of six catalytic PyrB chains organized as two trimers (C3), and six regulatory PyrI chains organized as three dimers (R2).

The catalysed reaction is carbamoyl phosphate + L-aspartate = N-carbamoyl-L-aspartate + phosphate + H(+). Its pathway is pyrimidine metabolism; UMP biosynthesis via de novo pathway; (S)-dihydroorotate from bicarbonate: step 2/3. In terms of biological role, catalyzes the condensation of carbamoyl phosphate and aspartate to form carbamoyl aspartate and inorganic phosphate, the committed step in the de novo pyrimidine nucleotide biosynthesis pathway. In Acetivibrio thermocellus (strain ATCC 27405 / DSM 1237 / JCM 9322 / NBRC 103400 / NCIMB 10682 / NRRL B-4536 / VPI 7372) (Clostridium thermocellum), this protein is Aspartate carbamoyltransferase catalytic subunit.